Reading from the N-terminus, the 342-residue chain is Probable long-chain-alcohol O-fatty-acyltransferase 3 (342 aa).

A run of 8 helical transmembrane segments spans residues 9-29, 36-56, 58-78, 115-135, 153-173, 227-247, 255-275, and 297-317; these read IKLWISAIISISYCYYLSTGI, LLSVLPVCALFLVFPLFFSYV, FSGCMAFFLSWLANFKLILFS, IPIWLFAIKVVIFVVLLQMYE, IFLELEIVFMLVKALVFITLG, MFLGVFAAFLVSGAVHEMLFF, TGEVTWFFLLHGVCTVAEVAV, and VGFVVVTSGWFFFPLIRSGII.

Belongs to the wax synthase family.

Its subcellular location is the membrane. The catalysed reaction is a long chain fatty alcohol + a fatty acyl-CoA = a wax ester + CoA. Functionally, catalyzes the final step in the synthesis of long-chain linear esters (waxes). This Arabidopsis thaliana (Mouse-ear cress) protein is Probable long-chain-alcohol O-fatty-acyltransferase 3 (AT3).